A 258-amino-acid polypeptide reads, in one-letter code: Thiamine thiazole synthase (258 aa).

NAD(+) contacts are provided by residues Ser-36, 55-56 (ER), Gly-63, Val-127, and 153-155 (HVD). Residues Asp-155 and His-170 each coordinate Fe cation. Residue Met-224 participates in NAD(+) binding. A glycine-binding site is contributed by Arg-234.

Belongs to the THI4 family. As to quaternary structure, homooctamer; tetramer of dimers. Fe(2+) is required as a cofactor.

The enzyme catalyses hydrogen sulfide + glycine + NAD(+) = ADP-5-ethyl-4-methylthiazole-2-carboxylate + nicotinamide + 3 H2O + H(+). The protein operates within cofactor biosynthesis; thiamine diphosphate biosynthesis. Functionally, involved in the biosynthesis of the thiazole moiety of thiamine. Catalyzes the conversion of NAD and glycine to adenosine diphosphate 5-(2-hydroxyethyl)-4-methylthiazole-2-carboxylate (ADT), an adenylated thiazole intermediate, using free sulfide as a source of sulfur. This chain is Thiamine thiazole synthase, found in Desulfosudis oleivorans (strain DSM 6200 / JCM 39069 / Hxd3) (Desulfococcus oleovorans).